The following is a 924-amino-acid chain: Intercellular adhesion molecule 5 (924 aa).

An N-terminal signal peptide occupies residues 1–31; sequence MPGPSPGLRRALLGLWAALGLGLFGLSAVSQ. Residues 32 to 835 are Extracellular-facing; that stretch reads EPFWADLQPR…RITVRVAGPW (804 aa). Ig-like C2-type domains follow at residues 48–130, 135–235, 242–329, 337–402, 408–486, 491–568, 573–662, 666–739, and 746–830; these read GGSL…PLPP, GENF…RLAA, GSER…LLTL, GQMV…SAEL, PRLD…VTLT, PALD…VAVT, PRFE…VVSA, PEMD…RTVT, and PVVA…ITVR. The N-linked (GlcNAc...) (high mannose) asparagine glycan is linked to Asn-54. Intrachain disulfides connect Cys-55–Cys-99 and Cys-59–Cys-103. 2 N-linked (GlcNAc...) asparagine glycosylation sites follow: Asn-74 and Asn-137. The cysteines at positions 142 and 198 are disulfide-linked. Thr-182 and Thr-184 each carry phosphothreonine. Residues Asn-195 and Asn-214 are each glycosylated (N-linked (GlcNAc...) asparagine). Residues Cys-249 and Cys-302 are joined by a disulfide bond. N-linked (GlcNAc...) asparagine glycosylation is found at Asn-303, Asn-316, Asn-371, and Asn-397. The cysteines at positions 344 and 383 are disulfide-linked. 3 cysteine pairs are disulfide-bonded: Cys-415/Cys-470, Cys-498/Cys-552, and Cys-580/Cys-645. N-linked (GlcNAc...) asparagine glycans are attached at residues Asn-583 and Asn-646. Cysteines 673 and 725 form a disulfide. N-linked (GlcNAc...) asparagine glycans are attached at residues Asn-764, Asn-795, and Asn-796. Cys-769 and Cys-814 are disulfide-bonded. Residues 836 to 856 form a helical membrane-spanning segment; it reads LWVAVGGAAGGAALLAAGAGL. Residues 857–924 lie on the Cytoplasmic side of the membrane; it reads AFYVQSTACK…EVFAIQLTSA (68 aa). The span at 891–903 shows a compositional bias: gly residues; that stretch reads AGGAAGAEGGPEA. A disordered region spans residues 891-911; it reads AGGAAGAEGGPEAAGGAAESP.

It belongs to the immunoglobulin superfamily. ICAM family. In terms of processing, glycosylation at Asn-54 is critical for functional folding. As to expression, expressed on neurons in the most rostral segment of the mammalian brain, the telencephalon.

It localises to the membrane. Its function is as follows. ICAM proteins are ligands for the leukocyte adhesion protein LFA-1 (integrin alpha-L/beta-2). The protein is Intercellular adhesion molecule 5 (ICAM5) of Homo sapiens (Human).